The following is a 158-amino-acid chain: Superoxide dismutase [Cu-Zn] (158 aa).

The Cu cation site is built by His46, His48, and His63. An intrachain disulfide couples Cys57 to Cys149. Zn(2+) is bound by residues His63, His71, His80, and Asp83. His120 is a Cu cation binding site.

The protein belongs to the Cu-Zn superoxide dismutase family. In terms of assembly, homodimer. Cu cation serves as cofactor. Requires Zn(2+) as cofactor.

It localises to the cytoplasm. It carries out the reaction 2 superoxide + 2 H(+) = H2O2 + O2. Destroys radicals which are normally produced within the cells and which are toxic to biological systems. In Brugia pahangi (Filarial nematode worm), this protein is Superoxide dismutase [Cu-Zn] (SODC).